The primary structure comprises 182 residues: Glycerol-3-phosphate acyltransferase 1 (182 aa).

The next 5 membrane-spanning stretches (helical) occupy residues 5–25 (MQFL…AYIV), 54–74 (GYFV…VSIA), 81–101 (STFL…PILF), 117–137 (IAFD…FYLI), and 157–177 (ILYS…VLIL).

It belongs to the PlsY family. Probably interacts with PlsX.

It is found in the cell membrane. The enzyme catalyses an acyl phosphate + sn-glycerol 3-phosphate = a 1-acyl-sn-glycero-3-phosphate + phosphate. It functions in the pathway lipid metabolism; phospholipid metabolism. In terms of biological role, catalyzes the transfer of an acyl group from acyl-phosphate (acyl-PO(4)) to glycerol-3-phosphate (G3P) to form lysophosphatidic acid (LPA). This enzyme utilizes acyl-phosphate as fatty acyl donor, but not acyl-CoA or acyl-ACP. In Bacillus thuringiensis subsp. konkukian (strain 97-27), this protein is Glycerol-3-phosphate acyltransferase 1.